A 237-amino-acid chain; its full sequence is Eukaryotic translation initiation factor 3 subunit K (237 aa).

The PCI domain occupies 44-219; the sequence is CDCNANRALL…EARKAEIRED (176 aa).

It belongs to the eIF-3 subunit K family. As to quaternary structure, component of the eukaryotic translation initiation factor 3 (eIF-3) complex.

The protein localises to the cytoplasm. Component of the eukaryotic translation initiation factor 3 (eIF-3) complex, which is involved in protein synthesis of a specialized repertoire of mRNAs and, together with other initiation factors, stimulates binding of mRNA and methionyl-tRNAi to the 40S ribosome. The eIF-3 complex specifically targets and initiates translation of a subset of mRNAs involved in cell proliferation. The polypeptide is Eukaryotic translation initiation factor 3 subunit K (Neurospora crassa (strain ATCC 24698 / 74-OR23-1A / CBS 708.71 / DSM 1257 / FGSC 987)).